We begin with the raw amino-acid sequence, 188 residues long: Peptidyl-tRNA hydrolase (188 aa).

Phenylalanine 15 provides a ligand contact to tRNA. Histidine 20 serves as the catalytic Proton acceptor. Residues tyrosine 64, asparagine 66, and asparagine 112 each contribute to the tRNA site.

This sequence belongs to the PTH family. Monomer.

It localises to the cytoplasm. The enzyme catalyses an N-acyl-L-alpha-aminoacyl-tRNA + H2O = an N-acyl-L-amino acid + a tRNA + H(+). Functionally, hydrolyzes ribosome-free peptidyl-tRNAs (with 1 or more amino acids incorporated), which drop off the ribosome during protein synthesis, or as a result of ribosome stalling. Catalyzes the release of premature peptidyl moieties from peptidyl-tRNA molecules trapped in stalled 50S ribosomal subunits, and thus maintains levels of free tRNAs and 50S ribosomes. The sequence is that of Peptidyl-tRNA hydrolase from Borreliella afzelii (strain PKo) (Borrelia afzelii).